The chain runs to 534 residues: N-acetylglutamate synthase, mitochondrial (534 aa).

The transit peptide at 1–18 directs the protein to the mitochondrion; that stretch reads MATALMAVVLRAAAVAPR. The segment at 19-99 is disordered; that stretch reads LRGRGGTGGA…HESPEPPSGR (81 aa). The segment at 19–376 is amino-acid kinase domain (AAK); sequence LRGRGGTGGA…SGTLFKNAER (358 aa). The segment covering 81–96 has biased composition (pro residues); that stretch reads VPSPRPPVPHESPEPP. Positions 375–526 constitute an N-acetyltransferase domain; sequence ERMLRVRSLD…HAKGLPDSFH (152 aa). Residues Lys-401, Lys-444, and 474-479 each bind substrate; that span reads RSRVTN.

The protein belongs to the acetyltransferase family. Homodimer. Homotetramer. Post-translationally, probably processed by mitochondrial processing peptidase (MPP). The long form has not yet been isolated. Highly expressed in the adult liver, kidney and small intestine. Weakly expressed in the fetal liver, lung, pancreas, placenta, heart and brain tissue.

It is found in the mitochondrion matrix. The enzyme catalyses L-glutamate + acetyl-CoA = N-acetyl-L-glutamate + CoA + H(+). Its pathway is amino-acid biosynthesis; L-arginine biosynthesis; N(2)-acetyl-L-ornithine from L-glutamate: step 1/4. With respect to regulation, increased by L-arginine. Its function is as follows. Plays a role in the regulation of ureagenesis by producing the essential cofactor N-acetylglutamate (NAG), thus modulating carbamoylphosphate synthase I (CPS1) activity. The sequence is that of N-acetylglutamate synthase, mitochondrial (NAGS) from Homo sapiens (Human).